Here is a 644-residue protein sequence, read N- to C-terminus: Exoribonuclease 2 (644 aa).

Positions 189–516 constitute an RNB domain; sequence RRDLTALNFV…NHRLLKAIVK (328 aa). Residues 561–643 enclose the S1 motif domain; sequence DTRFAAEIID…ETRSIIARPV (83 aa).

The protein belongs to the RNR ribonuclease family. RNase II subfamily.

The protein resides in the cytoplasm. It catalyses the reaction Exonucleolytic cleavage in the 3'- to 5'-direction to yield nucleoside 5'-phosphates.. Involved in mRNA degradation. Hydrolyzes single-stranded polyribonucleotides processively in the 3' to 5' direction. The polypeptide is Exoribonuclease 2 (Enterobacter sp. (strain 638)).